A 499-amino-acid polypeptide reads, in one-letter code: Heparin cofactor 2 (499 aa).

The signal sequence occupies residues Met-1–Gly-19. The residue at position 37 (Ser-37) is a Phosphoserine; by FAM20C. Asn-49 carries N-linked (GlcNAc...) (complex) asparagine glycosylation. The chemotactic activity stretch occupies residues Asp-68 to Tyr-79. 2 consecutive repeat copies span residues Gly-73 to Glu-83 and Ser-87 to Asp-97. The interval Gly-73–Asp-97 is 2 X 11 AA approximate repeats, Asp/Glu-rich (acidic) (hirudin-like). A sulfotyrosine mark is found at Tyr-79 and Tyr-92. The N-linked (GlcNAc...) asparagine glycan is linked to Asn-188. A glycosaminoglycan-binding site region spans residues Lys-192 to Arg-212. An N-linked (GlcNAc...) asparagine glycan is attached at Asn-387.

It belongs to the serpin family. Phosphorylated by FAM20C in the extracellular medium. Expressed predominantly in liver. Also present in plasma. In terms of tissue distribution, expressed in plasma (at protein level). Expressed in liver.

Its function is as follows. Thrombin inhibitor activated by the glycosaminoglycans, heparin or dermatan sulfate. In the presence of the latter, HC-II becomes the predominant thrombin inhibitor in place of antithrombin III (AT-III). Also inhibits chymotrypsin, but in a glycosaminoglycan-independent manner. Peptides at the N-terminal of HC-II have chemotactic activity for both monocytes and neutrophils. Functionally, shows negligible inhibition, in vitro, of thrombin and tPA and no inhibition of factor Xa, in vitro. This chain is Heparin cofactor 2 (SERPIND1), found in Homo sapiens (Human).